A 598-amino-acid polypeptide reads, in one-letter code: Nuclear receptor subfamily 4 group A member 1 (598 aa).

Disordered regions lie at residues 1 to 50 (MPCI…PTAL) and 120 to 159 (LDETLSSSGSDYYGSPCSAPSPSTPSFQPPQLSPWDGSFG). Low complexity-rich tracts occupy residues 37-50 (LASPEAAPTAPTAL) and 134-145 (SPCSAPSPSTPS). A required for nuclear import region spans residues 171–466 (RAWTEQLPKA…PAEGKLIFCS (296 aa)). A DNA-binding region (nuclear receptor) is located at residues 264 to 339 (EGRCAVCGDN…VGMVKEVVRT (76 aa)). 2 consecutive NR C4-type zinc fingers follow at residues 267-287 (CAVCGDNASCQHYGVRTCEGC) and 303-327 (CLANKDCPVDKRRRNRCQFCRFQKC). The interval 268 to 354 (AVCGDNASCQ…RRGRLPSKPK (87 aa)) is required for binding NBRE-containing DNA. The segment at 299–361 (AKYICLANKD…KPKQPPDASP (63 aa)) is required for the interaction with RXRA. A Phosphoserine; by PKA modification is found at Ser341. Positions 341–361 (SLKGRRGRLPSKPKQPPDASP) are disordered. Ser351 is subject to Phosphoserine; by PKA, RPS6KA1 and RPS6KA3. The 236-residue stretch at 360–595 (SPANLLTSLV…PIVDKIFMDT (236 aa)) folds into the NR LBD domain. The segment at 521-544 (PRRVEELQNRIASCLKEHVSAVAG) is binds lipopolysaccharide. An AF-2 region spans residues 584-595 (PPPIVDKIFMDT).

Belongs to the nuclear hormone receptor family. NR4 subfamily. In terms of assembly, binds the NGFI-B response element (NBRE) as a monomer. Binds the Nur response element (NurRE), consisting of two inverse NBRE-related octanucleotide repeats separated by 6 base-pairs, as a dimer. Interacts (via N-terminus) with NLRP3 (via LRR repeat domain); the interaction is direct, requires binding of NR4A1/Nur77 to NBRE-containing dsDNA and lipopolysaccharide, and leads to non-canonical NLRP3 inflammasome activation. Interacts with GADD45GIP1. Interacts with STK11. Heterodimer (via DNA-binding domain) with RXRA (via C-terminus); DNA-binding of the heterodimer is enhanced by 9-cis retinoic acid. Competes for the RXRA interaction with EP300 and thereby attenuates EP300 mediated acetylation of RXRA. Interacts with NCOA1. Interacts with NCOA2. Interacts with NCOA3. Zn(2+) is required as a cofactor. Phosphorylated at Ser-351 by RPS6KA1 and RPS6KA3 in response to mitogenic or stress stimuli. In terms of processing, acetylated by p300/CBP, acetylation increases stability. Deacetylated by HDAC1.

The protein localises to the cytoplasm. The protein resides in the cytosol. Its subcellular location is the nucleus. It localises to the mitochondrion. Functionally, orphan nuclear receptor. Binds the NGFI-B response element (NBRE) 5'-AAAGGTCA-3'. Binds 9-cis-retinoic acid outside of its ligand-binding (NR LBD) domain. Participates in energy homeostasis by sequestrating the kinase STK11 in the nucleus, thereby attenuating cytoplasmic AMPK activation. Regulates the inflammatory response in macrophages by regulating metabolic adaptations during inflammation, including repressing the transcription of genes involved in the citric acid cycle (TCA). Inhibits NF-kappa-B signaling by binding to low-affinity NF-kappa-B binding sites, such as at the IL2 promoter. May act concomitantly with NR4A2 in regulating the expression of delayed-early genes during liver regeneration. Plays a role in the vascular response to injury. Its function is as follows. In the cytosol, upon its detection of both bacterial lipopolysaccharide (LPS) and NBRE-containing mitochondrial DNA released by GSDMD pores during pyroptosis, it promotes non-canonical NLRP3 inflammasome activation by stimulating association of NLRP3 and NEK7. The protein is Nuclear receptor subfamily 4 group A member 1 (NR4A1) of Canis lupus familiaris (Dog).